We begin with the raw amino-acid sequence, 243 residues long: NAD(P)H-quinone oxidoreductase subunit K (243 aa).

[4Fe-4S] cluster is bound by residues Cys59, Cys60, Cys124, and Cys155.

This sequence belongs to the complex I 20 kDa subunit family. NDH-1 can be composed of about 15 different subunits; different subcomplexes with different compositions have been identified which probably have different functions. [4Fe-4S] cluster serves as cofactor.

The protein resides in the cellular thylakoid membrane. The enzyme catalyses a plastoquinone + NADH + (n+1) H(+)(in) = a plastoquinol + NAD(+) + n H(+)(out). It catalyses the reaction a plastoquinone + NADPH + (n+1) H(+)(in) = a plastoquinol + NADP(+) + n H(+)(out). Functionally, NDH-1 shuttles electrons from an unknown electron donor, via FMN and iron-sulfur (Fe-S) centers, to quinones in the respiratory and/or the photosynthetic chain. The immediate electron acceptor for the enzyme in this species is believed to be plastoquinone. Couples the redox reaction to proton translocation, and thus conserves the redox energy in a proton gradient. Cyanobacterial NDH-1 also plays a role in inorganic carbon-concentration. The chain is NAD(P)H-quinone oxidoreductase subunit K from Picosynechococcus sp. (strain ATCC 27264 / PCC 7002 / PR-6) (Agmenellum quadruplicatum).